A 91-amino-acid chain; its full sequence is RING finger protein Z (91 aa).

Gly2 carries the N-myristoyl glycine; by host lipid modification. The RING-type; atypical zinc-finger motif lies at 35-71; sequence CKCCWFQDKNLVECSDHYLCLKCISSMLKRGKNCEIC. The PTAP/PSAP motif signature appears at 85–88; it reads PTAP.

It belongs to the arenaviridae Z protein family. As to quaternary structure, interacts with protein NP; this interaction probably directs the encapsidated genome to budding sites. Interacts (via RING domain) with polymerase L; this interaction inhibits viral transcription and replication, Z partially blocks the product exit tunnel for the releasing nascent RNA product. Interacts with the glycoprotein complex; this interaction plays a role in virion budding. Interacts with host eIF4E; this interaction results in eIF4E reduced affinity for its substrate, the 5'-m7 G cap structure. Interacts (via late-budding domain) with host TSG101; this interaction is essential for budding and release of viral particles. Interacts with host RPLP0; this interaction may serve to load ribosome-like particles inside the virion. Interacts with host PML; this interaction induces PML bodies redistribution in the cytoplasm upon viral infection. Myristoylation is required for the role of RING finger protein Z in assembly and budding.

The protein resides in the virion. The protein localises to the host cytoplasm. Its subcellular location is the host perinuclear region. It is found in the host cell membrane. Its function is as follows. Plays a crucial role in virion assembly and budding. Expressed late in the virus life cycle, it acts as an inhibitor of viral transcription and RNA synthesis by interacting with the viral polymerase L. Presumably recruits the NP encapsidated genome to cellular membranes at budding sites via direct interaction with NP. Plays critical roles in the final steps of viral release by interacting with host TSG101, a member of the vacuolar protein-sorting pathway and using other cellular host proteins involved in vesicle formation pathway. The budding of the virus progeny occurs after association of protein Z with the viral glycoprotein complex SSP-GP1-GP2 at the cell periphery, step that requires myristoylation of protein Z. Also selectively represses protein production by associating with host eIF4E. In cell-based minigenome assay, has an inhibitory effect on the ribonucleoprotein machinery (vRNP), which is responsible for the replication and transcription of the viral genome. This chain is RING finger protein Z, found in Latino mammarenavirus (isolate Rat/Bolivia/MARU 1924/1965) (LATV).